The chain runs to 166 residues: Cytochrome c-type biogenesis protein CcmE (166 aa).

Residues 1-8 are Cytoplasmic-facing; sequence MNAVRRKK. The chain crosses the membrane as a helical; Signal-anchor for type II membrane protein span at residues 9-29; it reads LMWVMFTLAGAVIAVALVIYA. Residues 30 to 166 lie on the Periplasmic side of the membrane; that stretch reads IGKQTDYYFD…KLHETKTLQQ (137 aa). Heme contacts are provided by His124 and Tyr128. Residues 133-166 form a disordered region; the sequence is VAKSMKENNRSGAVPSSEQYNPAEKLHETKTLQQ. Residues 142 to 152 show a composition bias toward polar residues; sequence RSGAVPSSEQY. Basic and acidic residues predominate over residues 156-166; sequence EKLHETKTLQQ.

This sequence belongs to the CcmE/CycJ family.

Its subcellular location is the cell inner membrane. In terms of biological role, heme chaperone required for the biogenesis of c-type cytochromes. Transiently binds heme delivered by CcmC and transfers the heme to apo-cytochromes in a process facilitated by CcmF and CcmH. The polypeptide is Cytochrome c-type biogenesis protein CcmE (Psychrobacter arcticus (strain DSM 17307 / VKM B-2377 / 273-4)).